The sequence spans 947 residues: Bifunctional glutamine synthetase adenylyltransferase/adenylyl-removing enzyme (947 aa).

The adenylyl removase stretch occupies residues 1–440 (MTPLSSPLSQ…VFNELIGDDE (440 aa)). Residues 450–947 (SEPWREVWQD…ASWRKWLVAV (498 aa)) form an adenylyl transferase region.

This sequence belongs to the GlnE family. Mg(2+) serves as cofactor.

The catalysed reaction is [glutamine synthetase]-O(4)-(5'-adenylyl)-L-tyrosine + phosphate = [glutamine synthetase]-L-tyrosine + ADP. It catalyses the reaction [glutamine synthetase]-L-tyrosine + ATP = [glutamine synthetase]-O(4)-(5'-adenylyl)-L-tyrosine + diphosphate. Involved in the regulation of glutamine synthetase GlnA, a key enzyme in the process to assimilate ammonia. When cellular nitrogen levels are high, the C-terminal adenylyl transferase (AT) inactivates GlnA by covalent transfer of an adenylyl group from ATP to specific tyrosine residue of GlnA, thus reducing its activity. Conversely, when nitrogen levels are low, the N-terminal adenylyl removase (AR) activates GlnA by removing the adenylyl group by phosphorolysis, increasing its activity. The regulatory region of GlnE binds the signal transduction protein PII (GlnB) which indicates the nitrogen status of the cell. The chain is Bifunctional glutamine synthetase adenylyltransferase/adenylyl-removing enzyme from Salmonella paratyphi C (strain RKS4594).